Consider the following 997-residue polypeptide: Translation initiation factor IF-2 (997 aa).

The segment at Glu-101–Val-409 is disordered. Composition is skewed to low complexity over residues Ala-116–Pro-185, Ala-195–Ala-208, and Pro-244–Pro-280. The segment covering Asp-281–Glu-292 has biased composition (basic and acidic residues). The span at Arg-385–Gly-394 shows a compositional bias: gly residues. The span at Gln-400–Val-409 shows a compositional bias: basic and acidic residues. Residues Pro-498 to Glu-665 form the tr-type G domain. The interval Gly-507–Thr-514 is G1. Gly-507–Thr-514 contributes to the GTP binding site. A G2 region spans residues Gly-532 to His-536. The G3 stretch occupies residues Asp-553–Gly-556. Residues Asp-553–His-557 and Asn-607–Asp-610 each bind GTP. The G4 stretch occupies residues Asn-607 to Asp-610. The interval Ser-643–Lys-645 is G5.

It belongs to the TRAFAC class translation factor GTPase superfamily. Classic translation factor GTPase family. IF-2 subfamily.

Its subcellular location is the cytoplasm. Its function is as follows. One of the essential components for the initiation of protein synthesis. Protects formylmethionyl-tRNA from spontaneous hydrolysis and promotes its binding to the 30S ribosomal subunits. Also involved in the hydrolysis of GTP during the formation of the 70S ribosomal complex. The sequence is that of Translation initiation factor IF-2 from Bordetella bronchiseptica (strain ATCC BAA-588 / NCTC 13252 / RB50) (Alcaligenes bronchisepticus).